We begin with the raw amino-acid sequence, 240 residues long: tRNA (guanine-N(1)-)-methyltransferase (240 aa).

S-adenosyl-L-methionine is bound by residues Gly110 and 130-135 (VGDYVL).

Belongs to the RNA methyltransferase TrmD family. Homodimer.

It is found in the cytoplasm. The catalysed reaction is guanosine(37) in tRNA + S-adenosyl-L-methionine = N(1)-methylguanosine(37) in tRNA + S-adenosyl-L-homocysteine + H(+). Its function is as follows. Specifically methylates guanosine-37 in various tRNAs. This chain is tRNA (guanine-N(1)-)-methyltransferase, found in Borrelia recurrentis (strain A1).